Reading from the N-terminus, the 145-residue chain is Hemoglobin fetal subunit beta (145 aa).

The 145-residue stretch at 1 to 145 folds into the Globin domain; sequence MLSAEEKAAV…VANALAHRYH (145 aa). 2 residues coordinate heme b: H62 and H91.

Belongs to the globin family. In terms of assembly, heterotetramer of two alpha chains and two beta chains. In terms of tissue distribution, red blood cells.

Functionally, involved in oxygen transport from the lung to the various peripheral tissues. In Bos taurus (Bovine), this protein is Hemoglobin fetal subunit beta.